The sequence spans 101 residues: Small ribosomal subunit protein uS14 (101 aa).

Belongs to the universal ribosomal protein uS14 family. In terms of assembly, part of the 30S ribosomal subunit. Contacts proteins S3 and S10.

Binds 16S rRNA, required for the assembly of 30S particles and may also be responsible for determining the conformation of the 16S rRNA at the A site. The chain is Small ribosomal subunit protein uS14 from Alkalilimnicola ehrlichii (strain ATCC BAA-1101 / DSM 17681 / MLHE-1).